Here is a 537-residue protein sequence, read N- to C-terminus: Mitochondrial distribution and morphology protein 34 (537 aa).

An SMP-LTD domain is found at M1–L195. 4 disordered regions span residues Y320 to L339, G348 to H403, G421 to S493, and K516 to R537. Basic residues predominate over residues R355 to R371. The segment covering A378–S391 has biased composition (acidic residues). Residues D425–N441 are compositionally biased toward polar residues.

The protein belongs to the MDM34 family. Component of the ER-mitochondria encounter structure (ERMES) or MDM complex, composed of MMM1, MDM10, MDM12 and MDM34.

Its subcellular location is the mitochondrion outer membrane. Its function is as follows. Component of the ERMES/MDM complex, which serves as a molecular tether to connect the endoplasmic reticulum (ER) and mitochondria. Components of this complex are involved in the control of mitochondrial shape and protein biogenesis, and function in nonvesicular lipid trafficking between the ER and mitochondria. MDM34 is required for the interaction of the ER-resident membrane protein MMM1 and the outer mitochondrial membrane-resident beta-barrel protein MDM10. This is Mitochondrial distribution and morphology protein 34 from Chaetomium globosum (strain ATCC 6205 / CBS 148.51 / DSM 1962 / NBRC 6347 / NRRL 1970) (Soil fungus).